Consider the following 198-residue polypeptide: NAD(P)H dehydrogenase (quinone) (198 aa).

A Flavodoxin-like domain is found at 4 to 190 (ILVLYYSMYG…ILASFQGAHV (187 aa)). FMN is bound by residues 10–15 (SMYGHI) and 79–81 (TRF). Residue Y12 coordinates NAD(+). Residue W99 participates in substrate binding. Residues 114–119 (STGTGG) and H134 each bind FMN.

This sequence belongs to the WrbA family. It depends on FMN as a cofactor.

It catalyses the reaction a quinone + NADH + H(+) = a quinol + NAD(+). The catalysed reaction is a quinone + NADPH + H(+) = a quinol + NADP(+). This Azotobacter vinelandii (strain DJ / ATCC BAA-1303) protein is NAD(P)H dehydrogenase (quinone).